The sequence spans 329 residues: Phosphate acyltransferase (329 aa).

This sequence belongs to the PlsX family. In terms of assembly, homodimer. Probably interacts with PlsY.

It is found in the cytoplasm. It catalyses the reaction a fatty acyl-[ACP] + phosphate = an acyl phosphate + holo-[ACP]. It functions in the pathway lipid metabolism; phospholipid metabolism. In terms of biological role, catalyzes the reversible formation of acyl-phosphate (acyl-PO(4)) from acyl-[acyl-carrier-protein] (acyl-ACP). This enzyme utilizes acyl-ACP as fatty acyl donor, but not acyl-CoA. This chain is Phosphate acyltransferase, found in Campylobacter fetus subsp. fetus (strain 82-40).